Reading from the N-terminus, the 235-residue chain is Aspartate/glutamate leucyltransferase (235 aa).

It belongs to the R-transferase family. Bpt subfamily.

It is found in the cytoplasm. It carries out the reaction N-terminal L-glutamyl-[protein] + L-leucyl-tRNA(Leu) = N-terminal L-leucyl-L-glutamyl-[protein] + tRNA(Leu) + H(+). It catalyses the reaction N-terminal L-aspartyl-[protein] + L-leucyl-tRNA(Leu) = N-terminal L-leucyl-L-aspartyl-[protein] + tRNA(Leu) + H(+). In terms of biological role, functions in the N-end rule pathway of protein degradation where it conjugates Leu from its aminoacyl-tRNA to the N-termini of proteins containing an N-terminal aspartate or glutamate. This chain is Aspartate/glutamate leucyltransferase, found in Pseudomonas putida (strain W619).